Reading from the N-terminus, the 367-residue chain is Anhydro-N-acetylmuramic acid kinase (367 aa).

ATP is bound at residue 13 to 20 (GTSMDGAD).

It belongs to the anhydro-N-acetylmuramic acid kinase family.

It catalyses the reaction 1,6-anhydro-N-acetyl-beta-muramate + ATP + H2O = N-acetyl-D-muramate 6-phosphate + ADP + H(+). It participates in amino-sugar metabolism; 1,6-anhydro-N-acetylmuramate degradation. The protein operates within cell wall biogenesis; peptidoglycan recycling. Functionally, catalyzes the specific phosphorylation of 1,6-anhydro-N-acetylmuramic acid (anhMurNAc) with the simultaneous cleavage of the 1,6-anhydro ring, generating MurNAc-6-P. Is required for the utilization of anhMurNAc either imported from the medium or derived from its own cell wall murein, and thus plays a role in cell wall recycling. The chain is Anhydro-N-acetylmuramic acid kinase from Neisseria gonorrhoeae (strain ATCC 700825 / FA 1090).